The following is a 262-amino-acid chain: tRNA pseudouridine synthase A (262 aa).

Residue D51 is the Nucleophile of the active site. Y109 contributes to the substrate binding site.

It belongs to the tRNA pseudouridine synthase TruA family. As to quaternary structure, homodimer.

The enzyme catalyses uridine(38/39/40) in tRNA = pseudouridine(38/39/40) in tRNA. In terms of biological role, formation of pseudouridine at positions 38, 39 and 40 in the anticodon stem and loop of transfer RNAs. The chain is tRNA pseudouridine synthase A from Dechloromonas aromatica (strain RCB).